The following is a 187-amino-acid chain: Ubiquinone biosynthesis protein COQ4 homolog, mitochondrial (187 aa).

The Zn(2+) site is built by His77, Asp78, His81, and Glu93.

It belongs to the COQ4 family. In terms of assembly, component of a multi-subunit COQ enzyme complex. Zn(2+) serves as cofactor.

The protein resides in the mitochondrion inner membrane. The enzyme catalyses a 4-hydroxy-3-methoxy-5-(all-trans-polyprenyl)benzoate + H(+) = a 2-methoxy-6-(all-trans-polyprenyl)phenol + CO2. It functions in the pathway cofactor biosynthesis; ubiquinone biosynthesis. Its function is as follows. Lyase that catalyzes the C1-decarboxylation of 4-hydroxy-3-methoxy-5-(all-trans-polyprenyl)benzoic acid into 2-methoxy-6-(all-trans-polyprenyl)phenol during ubiquinone biosynthesis. This Leishmania major protein is Ubiquinone biosynthesis protein COQ4 homolog, mitochondrial.